The primary structure comprises 637 residues: Palmitoyltransferase Hip14 (637 aa).

Residues 1–295 (MYQSACQAAT…SKLRHDKRLR (295 aa)) are Cytoplasmic-facing. ANK repeat units follow at residues 77-106 (ETVT…TVDA), 111-140 (LNAT…DPRI), 144-173 (EGCS…DPDL), 177-207 (GGMT…NPAM), and 212-242 (HGNT…SLDV). A helical membrane pass occupies residues 296–315 (WWSMVACPFTAFYLAGIVFT). At 316–318 (VNT) the chain is on the lumenal side. Residues 319–341 (LYIIKFFLLGCLYSIFHTIGKAL) form a helical membrane-spanning segment. Over 342 to 345 (FDEH) the chain is Cytoplasmic. The chain crosses the membrane as a helical span at residues 346–366 (LMALLPLSVYLATKAWFYVTW). Residues 367–373 (LMYIDDA) lie on the Lumenal side of the membrane. A helical transmembrane segment spans residues 374-394 (VSFTATVCFLISSLLLWVCFL). At 395–472 (KSWKGDPGII…VGNCIGLKNH (78 aa)) the chain is on the cytoplasmic side. The DHHC domain maps to 430–480 (SFCSGCLVRRPIRSKHCSVCDRCVARFDHHCPWVGNCIGLKNHSYFMGFLW). Cys-460 functions as the S-palmitoyl cysteine intermediate in the catalytic mechanism. The chain crosses the membrane as a helical span at residues 473–493 (SYFMGFLWMLLIMCAWMLYGG). Residues 494–520 (SKYYVNQCNVRFDDFLGAMRAIGNCDA) lie on the Lumenal side of the membrane. A helical transmembrane segment spans residues 521–541 (WVGWVMGNALLHMSWVILLTI). Residues 542–637 (CQTYQVICLG…DGMAGDHQYV (96 aa)) lie on the Cytoplasmic side of the membrane.

Belongs to the DHHC palmitoyltransferase family. AKR/ZDHHC17 subfamily. In terms of assembly, interacts with dorsal-ventral patterning protein Sog. In stage 13-15 embryos, expressed in the central nervous system. At the third instar larval stage, expressed in the ventral nerve cord and is enriched in the neuropil.

It is found in the golgi apparatus membrane. It localises to the presynaptic cell membrane. It carries out the reaction L-cysteinyl-[protein] + hexadecanoyl-CoA = S-hexadecanoyl-L-cysteinyl-[protein] + CoA. Its function is as follows. Probable palmitoyltransferase which is required for photoreceptor synaptic transmission and for the correct expression and localization of palmitoylated protein Csp and synaptosomal-associated protein Snap25. Probably palmitoylates Csp. Probably also palmitoylates the dorsal-ventral patterning protein Sog and promotes its secretion and activity and the stabilization of the membrane-bound form. Required for synaptic vesicle exocytosis. In Drosophila melanogaster (Fruit fly), this protein is Palmitoyltransferase Hip14.